Consider the following 78-residue polypeptide: Pigment-dispersing hormone 2 peptides (78 aa).

The N-terminal stretch at 1-21 is a signal peptide; sequence MRSGVFVAVLVVVVFALLTQG. A75 is modified (alanine amide).

Belongs to the arthropod PDH family. As to expression, eyestalk sinus gland.

Its subcellular location is the secreted. In terms of biological role, the pigment-dispersing hormone causes the migration of the distal retinal pigment into the proximal end of the pigment chromatophore cells and thus decreases the amount of light entering the retinulas. May also function as a neurotransmitter and/or neuromodulator. The protein is Pigment-dispersing hormone 2 peptides (PDH2) of Callinectes sapidus (Blue crab).